A 670-amino-acid chain; its full sequence is Alpha-1,4-glucan:maltose-1-phosphate maltosyltransferase (670 aa).

Residues Lys262, Gln322, and Asp357 each coordinate alpha-maltose 1-phosphate. The Nucleophile role is filled by Asp393. Asn394 contacts alpha-maltose 1-phosphate. Catalysis depends on Glu422, which acts as the Proton donor. Alpha-maltose 1-phosphate is bound at residue 534 to 535 (KY).

This sequence belongs to the glycosyl hydrolase 13 family. GlgE subfamily. Homodimer.

It carries out the reaction alpha-maltose 1-phosphate + [(1-&gt;4)-alpha-D-glucosyl](n) = [(1-&gt;4)-alpha-D-glucosyl](n+2) + phosphate. Functionally, maltosyltransferase that uses maltose 1-phosphate (M1P) as the sugar donor to elongate linear or branched alpha-(1-&gt;4)-glucans. Is involved in a branched alpha-glucan biosynthetic pathway from trehalose, together with TreS, Mak and GlgB. This Chlorobaculum tepidum (strain ATCC 49652 / DSM 12025 / NBRC 103806 / TLS) (Chlorobium tepidum) protein is Alpha-1,4-glucan:maltose-1-phosphate maltosyltransferase.